Consider the following 477-residue polypeptide: ETS translocation variant 1 (477 aa).

Residue Ser94 is modified to Phosphoserine. The interval 128–179 is disordered; it reads PQVGMRPSNPPTPSSTPVSPLHHASPNSTHTPKPDRAFPAHLPPSQSIPDSS. Ser191 and Ser216 each carry phosphoserine; by RPS6KA1 and RPS6KA5. Residue Lys317 forms a Glycyl lysine isopeptide (Lys-Gly) (interchain with G-Cter in SUMO2) linkage. Positions 335-415 form a DNA-binding region, ETS; the sequence is LQLWQFLVAL…AGERYVYKFV (81 aa).

It belongs to the ETS family. In terms of processing, sumoylated. Phosphorylated at Ser-191 and Ser-216 by RPS6KA1 and RPS6KA5; phosphorylation activates transcriptional activity. As to expression, very highly expressed in brain, highly expressed in testis, lung and heart, moderately in spleen, small intestine, pancreas and colon, weakly in liver, prostate and thymus, very weakly in skeletal muscle, kidney and ovary and not in placenta and peripheral blood leukocytes.

The protein localises to the nucleus. Its function is as follows. Transcriptional activator that binds to DNA sequences containing the consensus pentanucleotide 5'-CGGA[AT]-3'. Required for olfactory dopaminergic neuron differentiation; may directly activate expression of tyrosine hydroxylase (TH). This Homo sapiens (Human) protein is ETS translocation variant 1.